A 205-amino-acid polypeptide reads, in one-letter code: Probable thymidylate kinase (205 aa).

10-17 (GIDGSGKS) contributes to the ATP binding site.

Belongs to the thymidylate kinase family.

It carries out the reaction dTMP + ATP = dTDP + ADP. The sequence is that of Probable thymidylate kinase from Methanosarcina barkeri (strain Fusaro / DSM 804).